The sequence spans 528 residues: Beta-hexosaminidase subunit alpha (528 aa).

A signal peptide spans 1-22 (MAGCRLWVSLLLAAALACLATA). Residues 23–88 (LWPWPQYIQT…PRPSFSKKQQ (66 aa)) constitute a propeptide that is removed on maturation. A disulfide bridge connects residues C58 and C104. Residues N115, N157, and N295 are each glycosylated (N-linked (GlcNAc...) asparagine). A disulfide bridge connects residues C277 and C328. E323 functions as the Proton donor in the catalytic mechanism. The interval 422–423 (NR) is critical for hydrolysis GM2 gangliosides. Residue N487 is glycosylated (N-linked (GlcNAc...) asparagine). Residues C504 and C521 are joined by a disulfide bond.

This sequence belongs to the glycosyl hydrolase 20 family. There are 3 beta-hexosaminidase isozymes: isozyme A (hexosaminidase A) is a heterodimer composed of one subunit alpha and one subunit beta (chain A and B); isozyme B (hexosaminidase B) is a homodimer of two beta subunits (two chains A and B); isozyme S (hexosaminidase S) is a homodimer of two alpha subunits. The composition of the dimer (isozyme A versus isozyme S) has a significant effect on the substrate specificity of the alpha subunit active site.

It is found in the lysosome. It carries out the reaction Hydrolysis of terminal non-reducing N-acetyl-D-hexosamine residues in N-acetyl-beta-D-hexosaminides.. The enzyme catalyses N-acetyl-beta-D-galactosaminyl-(1-&gt;4)-beta-D-3-sulfogalactosyl-(1-&gt;4)-beta-D-glucosyl-(1&lt;-&gt;1')-ceramide + H2O = a beta-D-3-sulfogalactosyl-(1-&gt;4)-beta-D-glucosyl-(1&lt;-&gt;1')-ceramide + N-acetyl-beta-D-galactosamine. The catalysed reaction is a ganglioside GM2 (d18:1(4E)) + H2O = a ganglioside GM3 (d18:1(4E)) + N-acetyl-beta-D-galactosamine. It catalyses the reaction a ganglioside GM2 + H2O = a ganglioside GM3 + N-acetyl-beta-D-galactosamine. It carries out the reaction beta-D-GalNAc-(1-&gt;4)-alpha-L-IdoA-(1-&gt;3)-beta-D-GalNAc-4-sulfate-(1-&gt;4)-alpha-L-IdoA-(1-&gt;3)-D-GalNAc-4-sulfate + H2O = alpha-L-IdoA-(1-&gt;3)-beta-D-GalNAc-4-sulfate-(1-&gt;4)-alpha-L-IdoA-(1-&gt;3)-D-GalNAc-4-sulfate + N-acetyl-D-galactosamine. The enzyme catalyses N-acetyl-beta-D-6-sulfogalactosaminyl-(1-&gt;4)-alpha-L-iduronyl-(1-&gt;3)-N-acetyl-D-6-sulfogalactosamine + H2O = alpha-L-iduronyl-(1-&gt;3)-N-acetyl-D-6-sulfogalactosamine + N-acetyl-D-6-sulfogalactosamine. With respect to regulation, addition of GM2A stimulates the hydrolysis of sulfated glycosphingolipid SM2 and the ganglioside GM2. Its function is as follows. Hydrolyzes the non-reducing end N-acetyl-D-hexosamine and/or sulfated N-acetyl-D-hexosamine of glycoconjugates, such as the oligosaccharide moieties from proteins and neutral glycolipids, or from certain mucopolysaccharides. The isozyme S is as active as the isozyme A on the anionic bis-sulfated glycans, the chondroitin-6-sulfate trisaccharide (C6S-3), and the dermatan sulfate pentasaccharide, and the sulfated glycosphingolipid SM2. The isozyme B does not hydrolyze each of these substrates, however hydrolyzes efficiently neutral oligosaccharide. Only the isozyme A is responsible for the degradation of GM2 gangliosides in the presence of GM2A. The chain is Beta-hexosaminidase subunit alpha from Rattus norvegicus (Rat).